We begin with the raw amino-acid sequence, 504 residues long: Peroxisomal catalase (504 aa).

Catalysis depends on residues histidine 63 and asparagine 136. Tyrosine 345 is a heme binding site. The short motif at 502–504 (NKF) is the Microbody targeting signal element.

It belongs to the catalase family. Requires heme as cofactor.

The protein localises to the peroxisome matrix. The enzyme catalyses 2 H2O2 = O2 + 2 H2O. Catalyzes the degradation of hydrogen peroxide (H(2)O(2)) generated by peroxisomal oxidases to water and oxygen, thereby protecting cells from the toxic effects of hydrogen peroxide. The chain is Peroxisomal catalase (CTA1) from Candida boidinii (Yeast).